We begin with the raw amino-acid sequence, 426 residues long: Dihydroorotase (426 aa).

Zn(2+)-binding residues include histidine 59 and histidine 61. Substrate contacts are provided by residues 61-63 and asparagine 93; that span reads HLR. Zn(2+) is bound by residues aspartate 151, histidine 178, and histidine 232. Asparagine 279 contacts substrate. Residue aspartate 306 participates in Zn(2+) binding. Aspartate 306 is a catalytic residue. Substrate is bound by residues histidine 310 and 324-325; that span reads FG.

This sequence belongs to the metallo-dependent hydrolases superfamily. DHOase family. Class I DHOase subfamily. Requires Zn(2+) as cofactor.

The catalysed reaction is (S)-dihydroorotate + H2O = N-carbamoyl-L-aspartate + H(+). Its pathway is pyrimidine metabolism; UMP biosynthesis via de novo pathway; (S)-dihydroorotate from bicarbonate: step 3/3. Catalyzes the reversible cyclization of carbamoyl aspartate to dihydroorotate. The sequence is that of Dihydroorotase from Brevibacillus brevis (strain 47 / JCM 6285 / NBRC 100599).